The following is a 317-amino-acid chain: Transaldolase (317 aa).

The active-site Schiff-base intermediate with substrate is K132.

It belongs to the transaldolase family. Type 1 subfamily. As to quaternary structure, homodimer.

The protein resides in the cytoplasm. It catalyses the reaction D-sedoheptulose 7-phosphate + D-glyceraldehyde 3-phosphate = D-erythrose 4-phosphate + beta-D-fructose 6-phosphate. Its pathway is carbohydrate degradation; pentose phosphate pathway; D-glyceraldehyde 3-phosphate and beta-D-fructose 6-phosphate from D-ribose 5-phosphate and D-xylulose 5-phosphate (non-oxidative stage): step 2/3. Transaldolase is important for the balance of metabolites in the pentose-phosphate pathway. The polypeptide is Transaldolase (Histophilus somni (strain 129Pt) (Haemophilus somnus)).